The chain runs to 59 residues: MAQVRVGQDESIESALRRFKRTVAKAGILAEAKRHRHFETPIEKRRRKAIARRRRYPRR.

Belongs to the bacterial ribosomal protein bS21 family.

The chain is Small ribosomal subunit protein bS21A from Gloeobacter violaceus (strain ATCC 29082 / PCC 7421).